The sequence spans 464 residues: 26S proteasome regulatory subunit 7 homolog B (464 aa).

Residue 246–253 (GPPGSGKT) participates in ATP binding. A Glycyl lysine isopeptide (Lys-Gly) (interchain with G-Cter in ubiquitin) cross-link involves residue Lys-452.

Belongs to the AAA ATPase family. In terms of assembly, component of the 19S regulatory particle (RP/PA700) base subcomplex of the 26S proteasome. The 26S proteasome is composed of a core protease (CP), known as the 20S proteasome, capped at one or both ends by the 19S regulatory particle (RP/PA700). The RP/PA700 complex is composed of at least 17 different subunits in two subcomplexes, the base and the lid, which form the portions proximal and distal to the 20S proteolytic core, respectively.

It localises to the cytoplasm. The protein localises to the nucleus. In terms of biological role, the 26S proteasome is involved in the ATP-dependent degradation of ubiquitinated proteins. The regulatory (or ATPase) complex confers ATP dependency and substrate specificity to the 26S complex. The protein is 26S proteasome regulatory subunit 7 homolog B (RPT1B) of Arabidopsis thaliana (Mouse-ear cress).